A 471-amino-acid chain; its full sequence is Arginine biosynthesis bifunctional protein ArgJ, mitochondrial (471 aa).

Substrate is bound by residues T190, K216, T239, E327, N466, and S471. The active-site Nucleophile is the T239.

Belongs to the ArgJ family. Heterodimer of an alpha and a beta chain. The alpha and beta chains are autoproteolytically processed from a single precursor protein within the mitochondrion.

The protein localises to the mitochondrion matrix. It carries out the reaction N(2)-acetyl-L-ornithine + L-glutamate = N-acetyl-L-glutamate + L-ornithine. It catalyses the reaction L-glutamate + acetyl-CoA = N-acetyl-L-glutamate + CoA + H(+). It participates in amino-acid biosynthesis; L-arginine biosynthesis; L-ornithine and N-acetyl-L-glutamate from L-glutamate and N(2)-acetyl-L-ornithine (cyclic): step 1/1. The protein operates within amino-acid biosynthesis; L-arginine biosynthesis; N(2)-acetyl-L-ornithine from L-glutamate: step 1/4. Functionally, catalyzes two activities which are involved in the cyclic version of arginine biosynthesis: the synthesis of acetylglutamate from glutamate and acetyl-CoA, and of ornithine by transacetylation between acetylornithine and glutamate. The sequence is that of Arginine biosynthesis bifunctional protein ArgJ, mitochondrial from Coprinopsis cinerea (strain Okayama-7 / 130 / ATCC MYA-4618 / FGSC 9003) (Inky cap fungus).